The following is a 925-amino-acid chain: NADH:fumarate oxidoreductase (925 aa).

Threonine 447 carries the FMN phosphoryl threonine modification. FAD contacts are provided by alanine 492, glutamate 511, asparagine 519, threonine 520, alanine 525, glycine 526, and valine 633. A fumarate-binding site is contributed by alanine 525. Succinate is bound at residue alanine 525. Residues histidine 719, serine 731, and glutamate 732 each coordinate succinate. Fumarate contacts are provided by serine 731 and glutamate 732. The Proton donor role is filled by arginine 756. Fumarate is bound at residue histidine 859. Histidine 859 serves as a coordination point for succinate. FAD is bound by residues histidine 860 and glutamate 889. Arginine 899 and glycine 902 together coordinate fumarate. Succinate-binding residues include arginine 899 and glycine 902. FAD is bound by residues alanine 904 and valine 905.

The protein belongs to the FAD-dependent oxidoreductase 2 family. FRD/SDH subfamily. In terms of assembly, monomer. Requires FAD as cofactor. FMN is required as a cofactor. Is flavinylated on Thr-447 by ApbE2, encoded in a neighboring gene. Flavinylation is essential for catalytic activity.

It localises to the cytoplasm. The enzyme catalyses succinate + NAD(+) = fumarate + NADH + H(+). Functionally, catalyzes the anaerobic reduction of fumarate to succinate. Uses NADH as the inherent electron donor in this process. Is involved in anaerobic fumarate respiration in K.pneumoniae. This is NADH:fumarate oxidoreductase from Klebsiella pneumoniae (strain 342).